The sequence spans 397 residues: RNA pseudouridine synthase 5 (397 aa).

Residues 64–114 (APLPGWIKRIRDGQITVDGEVATDPDMILREGSKLVYHRLPWQEPFAPHLL) enclose the S4 RNA-binding domain.

Belongs to the pseudouridine synthase RluA family.

The enzyme catalyses a uridine in RNA = a pseudouridine in RNA. This Oryza sativa subsp. japonica (Rice) protein is RNA pseudouridine synthase 5.